The following is a 543-amino-acid chain: Efflux pump mokI (543 aa).

The next 13 helical transmembrane spans lie at 30–50 (LVVTSVTLVVFLMLLDMSIIV), 90–110 (LLTLKYTFLAFLGVFEVGSAL), 125–145 (AVAGMGGSGLTNGAITILASA), 153–173 (LLIGIMMGLSQIAIVCGPLLG), 185–205 (CFYINLPVGALAAILLLAIHI), 233–253 (LLGFVLFAAFAVMISLALEWG), 261–281 (SSVIIGLFCGAGISLVVFGFW), 307–327 (LFLGFFSGALLTFSYYLPIYF), 340–360 (VYMLPGIGGQIVMAIVSGAII), 364–384 (GYYIPWALASGIIVSISAGLV), 394–416 (AAWVMYQFMGGFGRGCGMQTPII), 428–448 (ALGISLAMFGQTFGGSLFLTL), and 509–529 (VGASGATFLFAWGMGQVGLIW).

The protein belongs to the major facilitator superfamily. TCR/Tet family.

It localises to the membrane. Its function is as follows. Efflux pump; part of the gene cluster that mediates the biosynthesis of monakolin K, also known as lovastatin, and which acts as a potent competitive inhibitor of HMG-CoA reductase. This is Efflux pump mokI from Monascus pilosus (Red mold).